A 472-amino-acid chain; its full sequence is Guanine nucleotide-binding protein alpha-1 subunit (472 aa).

Gly2 carries the N-myristoyl glycine lipid modification. The S-palmitoyl cysteine moiety is linked to residue Cys3. One can recognise a G-alpha domain in the interval 40–472 (NEIKLLLLGA…QQNLKKIGII (433 aa)). The interval 43–56 (KLLLLGAGESGKST) is G1 motif. The GTP site is built by Glu51, Ser52, Gly53, Lys54, Ser55, and Thr56. Position 55 (Ser55) interacts with Mg(2+). Residues 127 to 235 (LDYINASVAG…REIQGQNRRN (109 aa)) are insert; not present in other G-proteins. Residues 162 to 199 (GRAKAAFDEDGNISNVKSDTDRDAETVTQNEDADRNNS) are disordered. A Glycyl lysine isopeptide (Lys-Gly) (interchain with G-Cter in ubiquitin) cross-link involves residue Lys165. A G2 motif region spans residues 292-300 (DILKGRIKT). 7 residues coordinate GTP: Leu294, Thr300, Gly322, Asn388, Lys389, Asp391, and Ala444. Thr300 contributes to the Mg(2+) binding site. The segment at 315–324 (FKVLDAGGQR) is G3 motif. The interval 384 to 391 (ILFLNKID) is G4 motif. The G5 motif stretch occupies residues 442-447 (TCATDT).

This sequence belongs to the G-alpha family. G(q) subfamily. In terms of assembly, g proteins are composed of 3 units; alpha, beta and gamma. The alpha chain contains the guanine nucleotide binding site. In its GDP-bound form, binds to the G protein beta-gamma dimer STE4-STE18. Directly interacts with the beta subunit STE4. Probably forms preactivation complexes with unligated receptors STE2 and STE3. Interacts with FUS3. Pheromone-induced activation of GPA1 increases its association with FUS3. Interacts with SCP160. SCP160 binds specifically to the GTP-bound form of GPA1. Interacts with the phosphatidylinositol 3-kinase (PI3K) subunits VPS15 and VPS34 at the endosome. The GTP-bound form of GPA1 binds directly and selectively to the catalytic subunit VPS34, while the GDP-bound form binds to VPS15, which appears to function as an alternative G protein beta subunit for GPA1. Interacts with regulators of G protein signaling (RGS) proteins MDM1, RAX1, RGS2 and SST2, but SST2 alone binds preferentially to the transition state conformation of GPA1, indicating that it acts as a GAP for this G protein. It depends on Mg(2+) as a cofactor. In terms of processing, N-myristoylation by NMT1 is pheromone-stimulated and required for palmitoylation of Cys-3. This lipid modification anchors the protein to membranes. Depalmitoylated by YLR118C/APT1. Post-translationally, monoubiquitination targets the protein for degradation to the vacuole, and polyubiquitination tags the protein for degradation by the proteasome. This may be an additional signaling regulation mechanism.

The protein localises to the cell membrane. It localises to the endosome membrane. With respect to regulation, alternates between an inactive form bound to GDP and an active form bound to GTP. Activated by the G protein coupled receptors (GPCRs) STE2 and STE3, which serve as guanine nucleotide-exchange factors (GEFs), and inactivated by SST2, probably acting as a GTPase-activating protein (GAP). Alpha subunit of the heterotrimeric guanine nucleotide-binding protein (G protein) that mediates mating pheromone signal transduction. Binding of alpha-factor or a-factor to its cognate transmembrane receptor STE2 and STE3, respectively, allows the receptor to serve as a guanine nucleotide exchange factor (GEF) on GPA1. The exchange of GDP for GTP on the G protein alpha subunit alters its interaction with the G protein beta subunit STE4, leading to dissociation of the G protein beta-gamma dimer STE4-STE18. The dissociated subunits activate downstream effectors to activate the mating response pathway and induce changes necessary to produce mating-competent cells. STE4-STE18 activate the downstream pheromone signaling MAP kinase cascade leading to expression of mating-specific genes, inducing cell cycle arrest in G1, promoting polarized cell growth to form mating projections (shmoos), and establishing the changes in plasma membrane, cell wall and nuclear envelope to permit cell-cell fusion (plasmogamy) and fusion of the two haploid nuclei (karyogamy). GPA1 transmits a signal that requires direct binding to the effector enzyme PI3K located at the endosome, promoting increased PI3 production. The intrinsic GTPase activity of GPA1 determines the duration of signaling, and is dramatically accelerated by the RGS protein SST2. In unstimulated cells, GDP-bound GPA1 sequesters the G protein beta-gamma subunit STE4-STE18, preventing it from activating the downstream effectors. Also down-regulates the signal by inhibiting the pheromone-induced accumulation of FUS3 in the nucleus. The protein is Guanine nucleotide-binding protein alpha-1 subunit (GPA1) of Saccharomyces cerevisiae (strain ATCC 204508 / S288c) (Baker's yeast).